We begin with the raw amino-acid sequence, 571 residues long: Protein dead ringer homolog (571 aa).

Disordered stretches follow at residues 45-117 and 190-229; these read QHQQ…EPDK and KRMQ…SCNG. Basic and acidic residues predominate over residues 49-77; the sequence is RMMEQHKNDDVISNDVRCDDFSDGGERQR. Residues 195 to 206 show a composition bias toward polar residues; it reads DHNIQQSTNHIP. Residues 207-224 show a composition bias toward low complexity; it reads TPSSASSHTSSGSVTSQT. Residues 249–341 form the ARID domain; the sequence is DIKRKEFLDD…YLYPFECERE (93 aa). Residues 459 to 471 show a composition bias toward low complexity; that stretch reads AAHHAAQQAAQHQ. Positions 459 to 528 are disordered; it reads AAHHAAQQAA…GDRGRHNEMS (70 aa). The 86-residue stretch at 473-558 folds into the REKLES domain; sequence SLKKEIDSDY…GVLFAHSPNH (86 aa). 2 stretches are compositionally biased toward basic and acidic residues: residues 487–507 and 518–527; these read PPEK…DNQR and MGDRGRHNEM.

It is found in the nucleus. Its function is as follows. Transcription factor. The polypeptide is Protein dead ringer homolog (Ci-DRIL1/2) (Ciona intestinalis (Transparent sea squirt)).